We begin with the raw amino-acid sequence, 108 residues long: Nucleoid-associated protein PSHAa1202 (108 aa).

Disordered stretches follow at residues 1–20 (MFKG…QDRM) and 87–108 (TQER…KMPF).

This sequence belongs to the YbaB/EbfC family. As to quaternary structure, homodimer.

It localises to the cytoplasm. The protein localises to the nucleoid. Binds to DNA and alters its conformation. May be involved in regulation of gene expression, nucleoid organization and DNA protection. This chain is Nucleoid-associated protein PSHAa1202, found in Pseudoalteromonas translucida (strain TAC 125).